Reading from the N-terminus, the 967-residue chain is uncharacterized protein (967 aa).

Disordered stretches follow at residues 1 to 23 (MQNAPKCYLPNSRKGRDVNFHDR) and 41 to 72 (FTMHSESIGPKSLDSLSPRRLSNYSSAVDPRT). Positions 14–23 (KGRDVNFHDR) are enriched in basic and acidic residues. A compositionally biased stretch (polar residues) spans 60–72 (RLSNYSSAVDPRT). At Ser86 the chain carries Phosphoserine. Disordered regions lie at residues 135-259 (AVSE…QHLP), 271-296 (SVSRSYQSPASTPRSSVSSVSSSPPE), 380-399 (DSTTEYVNTESSSKTPAPHK), 437-464 (HSYGSPKSLHHKSSSAGERPVSPTFVAD), and 499-544 (GTRF…KSLS). Positions 162-187 (ESSTSNNLETGNSTNTALHNVSSPLE) are enriched in polar residues. A compositionally biased stretch (basic and acidic residues) spans 205-218 (HDLDEVISEKDTSL). Over residues 221–234 (RSSRGRSSAPKRRK) the composition is skewed to basic residues. Positions 278–294 (SPASTPRSSVSSVSSSP) are enriched in low complexity. A compositionally biased stretch (polar residues) spans 382 to 394 (TTEYVNTESSSKT). Basic residues predominate over residues 499–508 (GTRFHSRSSH). The residue at position 585 (Ser585) is a Phosphoserine. 2 disordered regions span residues 594-665 (ESNE…SVND) and 681-708 (DHRIPASDNQNNNNNDANALAENSESQH). The segment covering 608-622 (YDSRESTGHTIKELR) has biased composition (basic and acidic residues). Residues 686–704 (ASDNQNNNNNDANALAENS) show a composition bias toward low complexity. 728-736 (PCVLDVKMG) contributes to the substrate binding site.

This sequence belongs to the inositol phosphokinase (IPK) family.

The protein resides in the cytoplasm. This is an uncharacterized protein from Schizosaccharomyces pombe (strain 972 / ATCC 24843) (Fission yeast).